The chain runs to 208 residues: High frequency lysogenization protein HflD homolog (208 aa).

This sequence belongs to the HflD family.

Its subcellular location is the cytoplasm. The protein resides in the cell inner membrane. The chain is High frequency lysogenization protein HflD homolog from Yersinia pestis bv. Antiqua (strain Nepal516).